The sequence spans 733 residues: DNA-binding protein SATB2 (733 aa).

A disordered region spans residues 1-47; sequence MERRSESPCLRDSPDRRSGSPDVKGPPPVKVARLEQNGSPMGARGRP. Serine 20 carries the post-translational modification Phosphoserine. Glycyl lysine isopeptide (Lys-Gly) (interchain with G-Cter in SUMO2) cross-links involve residues lysine 24 and lysine 30. The residue at position 39 (serine 39) is a Phosphoserine. In terms of domain architecture, CMP spans 57–158; sequence GLMIPVFCVV…VVTLKIQLQS (102 aa). A Glycyl lysine isopeptide (Lys-Gly) (interchain with G-Cter in SUMO2) cross-link involves residue lysine 161. The region spanning 161 to 234 is the CUTL domain; the sequence is KLEDLPAEQW…WYKKYKKIKV (74 aa). Lysine 233 participates in a covalent cross-link: Glycyl lysine isopeptide (Lys-Gly) (interchain with G-Cter in SUMO). A Glycyl lysine isopeptide (Lys-Gly) (interchain with G-Cter in SUMO); alternate cross-link involves residue lysine 350. Lysine 350 is covalently cross-linked (Glycyl lysine isopeptide (Lys-Gly) (interchain with G-Cter in SUMO2); alternate). A DNA-binding region (CUT 1) is located at residues 350–437; the sequence is KPEPTNSSVE…ERDRIYQDER (88 aa). The interval 435 to 473 is disordered; that stretch reads DERERSMNPNVSMVSSASSSPSSSRTPQAKTSTPTTDLP. Over residues 441–458 the composition is skewed to low complexity; it reads MNPNVSMVSSASSSPSSS. At serine 454 the chain carries Phosphoserine. The segment covering 459–470 has biased composition (polar residues); the sequence is RTPQAKTSTPTT. Residue threonine 467 is modified to Phosphothreonine. Positions 473 to 560 form a DNA-binding region, CUT 2; sequence PIKVDGANIN…ERDVIYEEES (88 aa). Residue lysine 475 forms a Glycyl lysine isopeptide (Lys-Gly) (interchain with G-Cter in SUMO2) linkage. Over residues 580 to 593 the composition is skewed to low complexity; the sequence is QVLHRQQSQPAKES. Disordered regions lie at residues 580 to 617 and 694 to 733; these read QVLH…KPRS and LLTE…IDQR. Serine 594 is subject to Phosphoserine. Residues 615-674 constitute a DNA-binding region (homeobox); the sequence is PRSRTKISLEALGILQSFIHDVGLYPDQEAIHTLSAQLDLPKHTIIKFFQNQRYHVKHHG. Acidic residues predominate over residues 694–708; that stretch reads LLTESEENDSEEGSE. Basic and acidic residues predominate over residues 709-733; that stretch reads EMYKVEAEEENADKSKAAPAEIDQR. Residue lysine 724 forms a Glycyl lysine isopeptide (Lys-Gly) (interchain with G-Cter in SUMO2) linkage.

The protein belongs to the CUT homeobox family. Interacts with ATF4 and RUNX2; resulting in enhanced DNA binding and transactivation by these transcription factors. Interacts with PIAS1. Sumoylated by PIAS1. Sumoylation promotes nuclear localization, but represses transcription factor activity. As to expression, high expression in adult brain, moderate expression in fetal brain, and weak expression in adult liver, kidney, and spinal cord and in select brain regions, including amygdala, corpus callosum, caudate nucleus, and hippocampus.

It localises to the nucleus matrix. Functionally, binds to DNA, at nuclear matrix- or scaffold-associated regions. Thought to recognize the sugar-phosphate structure of double-stranded DNA. Transcription factor controlling nuclear gene expression, by binding to matrix attachment regions (MARs) of DNA and inducing a local chromatin-loop remodeling. Acts as a docking site for several chromatin remodeling enzymes and also by recruiting corepressors (HDACs) or coactivators (HATs) directly to promoters and enhancers. Required for the initiation of the upper-layer neurons (UL1) specific genetic program and for the inactivation of deep-layer neurons (DL) and UL2 specific genes, probably by modulating BCL11B expression. Repressor of Ctip2 and regulatory determinant of corticocortical connections in the developing cerebral cortex. May play an important role in palate formation. Acts as a molecular node in a transcriptional network regulating skeletal development and osteoblast differentiation. This is DNA-binding protein SATB2 (SATB2) from Homo sapiens (Human).